A 353-amino-acid polypeptide reads, in one-letter code: Ubiquinol oxidase 1, mitochondrial (353 aa).

The transit peptide at 1 to 69 directs the protein to the mitochondrion; it reads MMTRGATRMT…RHFPVMGSRS (69 aa). The segment at 77–99 is disordered; the sequence is DKQHDKKAENGSAAATGGGDGGD. The chain crosses the membrane as a helical span at residues 178 to 198; it reads AMMLETVAAVPGMVGGMLLHC. 3 residues coordinate Fe cation: Glu-182, Glu-221, and His-224. A helical membrane pass occupies residues 240–260; the sequence is ALVFAVQGVFFNAYFVTYLLS. Fe cation is bound by residues Glu-272, Glu-323, and His-326.

Belongs to the alternative oxidase family. In terms of assembly, homodimer; disulfide-linked. It depends on Fe cation as a cofactor.

The protein localises to the mitochondrion inner membrane. It catalyses the reaction 2 a ubiquinol + O2 = 2 a ubiquinone + 2 H2O. Stimulated by reduction of the disulfide bond and the presence of pyruvate. Catalyzes the cyanide-resistant oxidation of ubiquinol and the reduction of molecular oxygen to water, but does not translocate protons and consequently is not linked to oxidative phosphorylation. May increase respiration when the cytochrome respiratory pathway is restricted, or in response to low temperatures. This Nicotiana tabacum (Common tobacco) protein is Ubiquinol oxidase 1, mitochondrial (AOX1).